Here is a 432-residue protein sequence, read N- to C-terminus: Serine hydroxymethyltransferase (432 aa).

(6S)-5,6,7,8-tetrahydrofolate contacts are provided by residues L131 and 135-137 (GHL). Position 240 is an N6-(pyridoxal phosphate)lysine (K240).

The protein belongs to the SHMT family. As to quaternary structure, homodimer. Requires pyridoxal 5'-phosphate as cofactor.

It localises to the cytoplasm. The catalysed reaction is (6R)-5,10-methylene-5,6,7,8-tetrahydrofolate + glycine + H2O = (6S)-5,6,7,8-tetrahydrofolate + L-serine. Its pathway is one-carbon metabolism; tetrahydrofolate interconversion. It functions in the pathway amino-acid biosynthesis; glycine biosynthesis; glycine from L-serine: step 1/1. Functionally, catalyzes the reversible interconversion of serine and glycine with tetrahydrofolate (THF) serving as the one-carbon carrier. This reaction serves as the major source of one-carbon groups required for the biosynthesis of purines, thymidylate, methionine, and other important biomolecules. Also exhibits THF-independent aldolase activity toward beta-hydroxyamino acids, producing glycine and aldehydes, via a retro-aldol mechanism. The sequence is that of Serine hydroxymethyltransferase from Bradyrhizobium diazoefficiens (strain JCM 10833 / BCRC 13528 / IAM 13628 / NBRC 14792 / USDA 110).